We begin with the raw amino-acid sequence, 493 residues long: Glycerol kinase (493 aa).

Threonine 13 is an ADP binding site. ATP contacts are provided by threonine 13, threonine 14, and serine 15. Threonine 13 contributes to the sn-glycerol 3-phosphate binding site. ADP is bound at residue arginine 17. Arginine 83, glutamate 84, tyrosine 135, and aspartate 244 together coordinate sn-glycerol 3-phosphate. Residues arginine 83, glutamate 84, tyrosine 135, aspartate 244, and glutamine 245 each contribute to the glycerol site. ADP contacts are provided by threonine 266 and glycine 309. 4 residues coordinate ATP: threonine 266, glycine 309, glutamine 313, and glycine 410. Positions 410 and 414 each coordinate ADP.

The protein belongs to the FGGY kinase family.

The enzyme catalyses glycerol + ATP = sn-glycerol 3-phosphate + ADP + H(+). It participates in polyol metabolism; glycerol degradation via glycerol kinase pathway; sn-glycerol 3-phosphate from glycerol: step 1/1. Inhibited by fructose 1,6-bisphosphate (FBP). Its function is as follows. Key enzyme in the regulation of glycerol uptake and metabolism. Catalyzes the phosphorylation of glycerol to yield sn-glycerol 3-phosphate. This is Glycerol kinase from Shewanella halifaxensis (strain HAW-EB4).